Here is a 132-residue protein sequence, read N- to C-terminus: Small ribosomal subunit protein uS8 (132 aa).

The protein belongs to the universal ribosomal protein uS8 family. As to quaternary structure, part of the 30S ribosomal subunit. Contacts proteins S5 and S12.

Functionally, one of the primary rRNA binding proteins, it binds directly to 16S rRNA central domain where it helps coordinate assembly of the platform of the 30S subunit. The polypeptide is Small ribosomal subunit protein uS8 (Lactobacillus delbrueckii subsp. bulgaricus (strain ATCC BAA-365 / Lb-18)).